The chain runs to 112 residues: MRKVAPFLLLTYVVLAHYANYLILLLPLSVISKAICLTLSSFVFSSAALLVILVSLATWNTTRKPDGLNHQVTQGKKSHTQSQQTGPTTLTSDRILDDFPDDYEKFRWRVPF.

Positions 64 to 93 (KPDGLNHQVTQGKKSHTQSQQTGPTTLTSD) are disordered. The span at 70–92 (HQVTQGKKSHTQSQQTGPTTLTS) shows a compositional bias: polar residues.

This is Protein 4.2 from Escherichia phage T7 (Bacteriophage T7).